The chain runs to 467 residues: MSKDTLFDKVWDLHKVSSLPGGSDQIFIGLHLIHEVTSPQAFGALKDKNLRVKFPSRTVATVDHIVPTDNQSRPFKDNLAEQMIETLEKNCIEHKIRFFNIGSGNQGIVHVVAPELGLTQPGMTIACGDSHTSTHGAFGSIAFGIGTSQVRDVLATQTIAMNKLKVRQIWCENKLSNGVYAKDLVLHIINKLGVKAGVGFAYEFAGPAINSLSMEERMTICNMSIEGGARCGYINPDEKTFSYIKNKLCAPRNENWDEALLWWKSLKSDANSIYDDVTKIDASKVEPTVTWGITPGQSVGINQKIPLLEELSPDDQFVAKEAYEYMGFKPGQSIKDTPIDVCFIGSCTNGRISDLRVAAKVVKDKKVSQNIKAFVVPGSEKVAKEAKIEGLDKIFLDAGFQWREPGCSMCLAMNSDKLIGNQLSASSSNRNFKGRQGSPNGRTLLMSPAMVAAAAISGKVTDIRNFM.

Residues C347, C407, and C410 each contribute to the [4Fe-4S] cluster site.

The protein belongs to the aconitase/IPM isomerase family. LeuC type 1 subfamily. In terms of assembly, heterodimer of LeuC and LeuD. [4Fe-4S] cluster is required as a cofactor.

The catalysed reaction is (2R,3S)-3-isopropylmalate = (2S)-2-isopropylmalate. It functions in the pathway amino-acid biosynthesis; L-leucine biosynthesis; L-leucine from 3-methyl-2-oxobutanoate: step 2/4. Functionally, catalyzes the isomerization between 2-isopropylmalate and 3-isopropylmalate, via the formation of 2-isopropylmaleate. In Prochlorococcus marinus (strain MIT 9301), this protein is 3-isopropylmalate dehydratase large subunit.